A 280-amino-acid polypeptide reads, in one-letter code: Acetyl-coenzyme A carboxylase carboxyl transferase subunit beta (280 aa).

The CoA carboxyltransferase N-terminal domain maps to 28-280 (IMTKCPSCRT…TLTKLLAMHQ (253 aa)). The Zn(2+) site is built by C32, C35, C51, and C54. A C4-type zinc finger spans residues 32 to 54 (CPSCRTIMYTKDLKKNLSVCRTC).

The protein belongs to the AccD/PCCB family. Acetyl-CoA carboxylase is a heterohexamer composed of biotin carboxyl carrier protein (AccB), biotin carboxylase (AccC) and two subunits each of ACCase subunit alpha (AccA) and ACCase subunit beta (AccD). The cofactor is Zn(2+).

Its subcellular location is the cytoplasm. It catalyses the reaction N(6)-carboxybiotinyl-L-lysyl-[protein] + acetyl-CoA = N(6)-biotinyl-L-lysyl-[protein] + malonyl-CoA. It functions in the pathway lipid metabolism; malonyl-CoA biosynthesis; malonyl-CoA from acetyl-CoA: step 1/1. Functionally, component of the acetyl coenzyme A carboxylase (ACC) complex. Biotin carboxylase (BC) catalyzes the carboxylation of biotin on its carrier protein (BCCP) and then the CO(2) group is transferred by the transcarboxylase to acetyl-CoA to form malonyl-CoA. This is Acetyl-coenzyme A carboxylase carboxyl transferase subunit beta from Shouchella clausii (strain KSM-K16) (Alkalihalobacillus clausii).